Consider the following 250-residue polypeptide: Sulfate transporter CysZ (250 aa).

4 consecutive transmembrane segments (helical) span residues leucine 26 to alanine 46, isoleucine 71 to leucine 91, leucine 150 to phenylalanine 170, and isoleucine 211 to alanine 231.

The protein belongs to the CysZ family.

The protein localises to the cell inner membrane. Its function is as follows. High affinity, high specificity proton-dependent sulfate transporter, which mediates sulfate uptake. Provides the sulfur source for the cysteine synthesis pathway. The protein is Sulfate transporter CysZ of Pseudomonas fluorescens (strain Pf0-1).